The sequence spans 259 residues: MATEAHDAGGATGYIVHHLTPLSSGEGFWTLHVDTLFFSVFLGAVFLFFFRKAAEQATAGVPGPFQNFVEMIVEFVDTQVKDSFHGRNALIAPLALSIFAWVFLMNAMDLLPVDLLPDVGKAIGLEYLRVVPSTDLNATFGMSISVFFLIIFYSLKVKGPGHFAMEFLFHPFSHWALVPFNLLLNTVEYLAKPVSLGLRLFGNMYAGELIFILIALLPWWVQPALSFPWAVFHILIITLQAFIFMVLTIVYLSLAHESH.

Transmembrane regions (helical) follow at residues 30–50 (TLHVDTLFFSVFLGAVFLFFF), 90–110 (LIAPLALSIFAWVFLMNAMDL), 135–155 (DLNATFGMSISVFFLIIFYSL), 209–229 (LIFILIALLPWWVQPALSFPW), and 230–250 (AVFHILIITLQAFIFMVLTIV).

Belongs to the ATPase A chain family. F-type ATPases have 2 components, CF(1) - the catalytic core - and CF(0) - the membrane proton channel. CF(1) has five subunits: alpha(3), beta(3), gamma(1), delta(1), epsilon(1). CF(0) has three main subunits: a(1), b(2) and c(9-12). The alpha and beta chains form an alternating ring which encloses part of the gamma chain. CF(1) is attached to CF(0) by a central stalk formed by the gamma and epsilon chains, while a peripheral stalk is formed by the delta and b chains.

The protein resides in the cell inner membrane. In terms of biological role, key component of the proton channel; it plays a direct role in the translocation of protons across the membrane. This chain is ATP synthase subunit a 1, found in Methylococcus capsulatus (strain ATCC 33009 / NCIMB 11132 / Bath).